The following is a 129-amino-acid chain: MEHPSTNYTPEQQHEKLKHYILIPRHLWCYIKYGTHVRYYTTQNVFRVGGFVLQNPYEAVIKNEVKTAIRLQNSFNTKAKGHVTWTVPYDDISKLYAKPDAIMLTIQENVEKALHALNQNVLTLAAKIR.

Belongs to the asfivirus C129R family.

The protein resides in the virion. Plays a role in the inhibition of type I interferon signaling pathway. Mechanistically, specifically interacts with 2',3'-cGAMP and cleaves it via its phosphodiesterase activity. In turn, prevents 2',3'-cGAMP interaction with host ER-resident STING1 leading to inhibition of downstream signaling pathway and type I interferon production. This is an uncharacterized protein from African swine fever virus (isolate Pig/Kenya/KEN-50/1950) (ASFV).